We begin with the raw amino-acid sequence, 320 residues long: 4-diphosphocytidyl-2-C-methyl-D-erythritol kinase (320 aa).

The active site involves K20. 112 to 122 (PVAGGMGGGSA) provides a ligand contact to ATP. D154 is an active-site residue.

The protein belongs to the GHMP kinase family. IspE subfamily.

It carries out the reaction 4-CDP-2-C-methyl-D-erythritol + ATP = 4-CDP-2-C-methyl-D-erythritol 2-phosphate + ADP + H(+). Its pathway is isoprenoid biosynthesis; isopentenyl diphosphate biosynthesis via DXP pathway; isopentenyl diphosphate from 1-deoxy-D-xylulose 5-phosphate: step 3/6. Functionally, catalyzes the phosphorylation of the position 2 hydroxy group of 4-diphosphocytidyl-2C-methyl-D-erythritol. This chain is 4-diphosphocytidyl-2-C-methyl-D-erythritol kinase, found in Pseudarthrobacter chlorophenolicus (strain ATCC 700700 / DSM 12829 / CIP 107037 / JCM 12360 / KCTC 9906 / NCIMB 13794 / A6) (Arthrobacter chlorophenolicus).